We begin with the raw amino-acid sequence, 223 residues long: Putative thymidylate synthase (223 aa).

The active site involves C146.

This sequence belongs to the thymidylate synthase family. Archaeal-type ThyA subfamily. As to quaternary structure, monomer.

It is found in the cytoplasm. It participates in pyrimidine metabolism; dTTP biosynthesis. Functionally, may catalyze the biosynthesis of dTMP using an unknown cosubstrate. In vitro, also catalyzes the dehalogenation of 5-bromo-deoxyuridine monophosphate (Br-dUMP) and the tritium exchange of [5-3H]deoxyuridine monophosphate ([5-3H]dUMP). The sequence is that of Putative thymidylate synthase (thyA) from Methanothermobacter marburgensis (strain ATCC BAA-927 / DSM 2133 / JCM 14651 / NBRC 100331 / OCM 82 / Marburg) (Methanobacterium thermoautotrophicum).